The chain runs to 100 residues: Large ribosomal subunit protein eL31 (100 aa).

Belongs to the eukaryotic ribosomal protein eL31 family.

The sequence is that of Large ribosomal subunit protein eL31 from Hyperthermus butylicus (strain DSM 5456 / JCM 9403 / PLM1-5).